We begin with the raw amino-acid sequence, 313 residues long: Olfactory receptor 4E2 (313 aa).

Over 1-25 the chain is Extracellular; that stretch reads MDSLNQTRVTEFVFLGLTDNRVLEM. Asparagine 5 carries N-linked (GlcNAc...) asparagine glycosylation. Residues 26-49 form a helical membrane-spanning segment; it reads LFFMAFSAIYMLTLSGNILIIIAT. The Cytoplasmic portion of the chain corresponds to 50 to 57; sequence VFTPSLHT. The chain crosses the membrane as a helical span at residues 58–79; that stretch reads PMYFFLSNLSFIDICHSSVTVP. The Extracellular portion of the chain corresponds to 80–100; sequence KMLEGLLLERKTISFDNCITQ. The cysteines at positions 97 and 179 are disulfide-linked. Residues 101–120 traverse the membrane as a helical segment; the sequence is LFFLHLFACAEIFLLIIVAY. Cu cation contacts are provided by histidine 105 and cysteine 109. Residues 121–139 are Cytoplasmic-facing; sequence DRYVAICTPLHYPNVMNMR. The helical transmembrane segment at 140 to 158 threads the bilayer; that stretch reads VCIQLVFALWLGGTVHSLG. Over 159-195 the chain is Extracellular; sequence QTFLTIRLPYCGPNIIDSYFCDVPLVIKLACTDTYLT. A helical membrane pass occupies residues 196 to 219; sequence GILIVTNSGTISLSCFLAVVTSYM. At 220–235 the chain is on the cytoplasmic side; sequence VILVSLRKHSAEGRQK. The chain crosses the membrane as a helical span at residues 236-258; the sequence is ALSTCSAHFMVVALFFGPCIFIY. Over 259–269 the chain is Extracellular; it reads TRPDTSFSIDK. Position 260 (arginine 260) interacts with Cu cation. Residues 270-289 traverse the membrane as a helical segment; it reads VVSVFYTVVTPLLNPFIYTL. The Cytoplasmic segment spans residues 290–313; it reads RNEEVKSAMKQLRQRQVFFTKSYT.

The protein belongs to the G-protein coupled receptor 1 family.

The protein localises to the cell membrane. Copper binding enhances receptor activity in response to odorant binding. Its function is as follows. Olfactory receptor that is activated by the binding of organosulfur odorants with thioether groups such as (methylthio)methanethiol (MTMT) and bis(methylthiomethyl) disulfide. Also binds odorants cis-cyclooctene and tert-butyl mercaptan. The activity of this receptor is mediated by G proteins which activate adenylyl cyclase. The chain is Olfactory receptor 4E2 from Homo sapiens (Human).